The following is a 195-amino-acid chain: CASP-like protein 1B1 (195 aa).

Topologically, residues 1-15 are cytoplasmic; sequence MAKLALAATSGKSCK. Residues 16 to 36 form a helical membrane-spanning segment; that stretch reads ILLGLRLLAFSATLSAAIVMG. Residues 37–67 are Extracellular-facing; it reads LNKETETFVVGKVGNTPIKATFTAKFDHTPA. A helical transmembrane segment spans residues 68–88; that stretch reads FVFFVVANAMVSFHNLLMIAL. At 89 to 104 the chain is on the cytoplasmic side; it reads QIFGGKMEFTGFRLLS. A helical transmembrane segment spans residues 105–125; that stretch reads VAILDMLNVTLISAAANAAAF. The Extracellular portion of the chain corresponds to 126 to 154; the sequence is MAEVGKNGNKHARWDKICDRFATYCDHGA. The helical transmembrane segment at 155–175 threads the bilayer; that stretch reads GALIAAFAGVILMLIISAASI. Residues 176–195 are Cytoplasmic-facing; sequence SRLAQQNKCCSTTASPSVVP.

This sequence belongs to the Casparian strip membrane proteins (CASP) family. Homodimer and heterodimers.

The protein resides in the cell membrane. This is CASP-like protein 1B1 from Arabidopsis lyrata subsp. lyrata (Lyre-leaved rock-cress).